The sequence spans 465 residues: G1/S-specific cyclin CLN3 (465 aa).

Positions 44-171 (EMLHHLLSVE…HILKSLEWVV (128 aa)) constitute a Cyclin N-terminal domain.

This sequence belongs to the cyclin family. As to quaternary structure, interacts with CDC28 and SLA1. Hyperphosphorylated. GRR1 preferentially mediates the degradation of hyperphosphorylated CLN3.

In terms of biological role, G1/S-specific cyclin essential for the control of the cell cycle at the G1/S (start) transition. CLN3 may be an upstream activator of the G1 cyclins which directly catalyze start. Required for budding and for cell cycle progression and morphogenesis in environment-induced hyphae. Degradation is mediated by GRR1. Through binding to CDC28, controls the phosphorylation of SLA1 which regulates cortical actin patch dynamics. The chain is G1/S-specific cyclin CLN3 (CLN3) from Candida albicans (strain SC5314 / ATCC MYA-2876) (Yeast).